Consider the following 186-residue polypeptide: Alkyl hydroperoxide reductase AhpD (186 aa).

The Proton donor role is filled by Cys-132. Cys-132 and Cys-135 are disulfide-bonded. The Cysteine sulfenic acid (-SOH) intermediate role is filled by Cys-135.

It belongs to the AhpD family.

The catalysed reaction is N(6)-[(R)-dihydrolipoyl]-L-lysyl-[lipoyl-carrier protein] + a hydroperoxide = N(6)-[(R)-lipoyl]-L-lysyl-[lipoyl-carrier protein] + an alcohol + H2O. Antioxidant protein with alkyl hydroperoxidase activity. Required for the reduction of the AhpC active site cysteine residues and for the regeneration of the AhpC enzyme activity. This chain is Alkyl hydroperoxide reductase AhpD, found in Anaeromyxobacter sp. (strain K).